The following is a 556-amino-acid chain: 2-succinyl-5-enolpyruvyl-6-hydroxy-3-cyclohexene-1-carboxylate synthase (556 aa).

Belongs to the TPP enzyme family. MenD subfamily. In terms of assembly, homodimer. The cofactor is Mg(2+). Requires Mn(2+) as cofactor. Thiamine diphosphate is required as a cofactor.

It catalyses the reaction isochorismate + 2-oxoglutarate + H(+) = 5-enolpyruvoyl-6-hydroxy-2-succinyl-cyclohex-3-ene-1-carboxylate + CO2. Its pathway is quinol/quinone metabolism; 1,4-dihydroxy-2-naphthoate biosynthesis; 1,4-dihydroxy-2-naphthoate from chorismate: step 2/7. The protein operates within quinol/quinone metabolism; menaquinone biosynthesis. Catalyzes the thiamine diphosphate-dependent decarboxylation of 2-oxoglutarate and the subsequent addition of the resulting succinic semialdehyde-thiamine pyrophosphate anion to isochorismate to yield 2-succinyl-5-enolpyruvyl-6-hydroxy-3-cyclohexene-1-carboxylate (SEPHCHC). The protein is 2-succinyl-5-enolpyruvyl-6-hydroxy-3-cyclohexene-1-carboxylate synthase of Citrobacter koseri (strain ATCC BAA-895 / CDC 4225-83 / SGSC4696).